We begin with the raw amino-acid sequence, 865 residues long: ABC transporter ATP-binding/permease protein Rv1747 (865 aa).

In terms of domain architecture, FHA 1 spans valine 29–valine 78. The tract at residues glycine 104–alanine 205 is disordered. A compositionally biased stretch (low complexity) spans proline 135 to proline 156. Threonine 152 is subject to Phosphothreonine. The span at alanine 157–arginine 166 shows a compositional bias: pro residues. Threonine 210 carries the post-translational modification Phosphothreonine. Residues valine 230–valine 279 form the FHA 2 domain. The ABC transporter domain occupies leucine 319 to isoleucine 552. ATP is bound at residue glycine 352–serine 359. One can recognise an ABC transmembrane type-2 domain in the interval arginine 596–serine 810. 6 consecutive transmembrane segments (helical) span residues glycine 614–proline 634, proline 652–isoleucine 672, valine 700–valine 720, phenylalanine 740–isoleucine 760, isoleucine 767–proline 787, and serine 836–valine 856.

It in the central section; belongs to the ABC transporter superfamily. In the C-terminal section; belongs to the ABC-2 integral membrane protein family. In terms of assembly, homodimer. Interacts with PknF. Phosphorylated by PknF. Can probably be phosphorylated in vivo by other kinases when PknF is missing.

It localises to the cell membrane. Function is positively regulated by phosphorylation. Its function is as follows. Involved in the translocation of an unknown substrate across the membrane. Transmembrane domains (TMD) form a pore in the membrane and the ATP-binding domain (NBD) is responsible for energy generation. Required for virulence. The sequence is that of ABC transporter ATP-binding/permease protein Rv1747 from Mycobacterium tuberculosis (strain ATCC 25618 / H37Rv).